Here is a 143-residue protein sequence, read N- to C-terminus: Large ribosomal subunit protein uL11 (143 aa).

It belongs to the universal ribosomal protein uL11 family. As to quaternary structure, part of the ribosomal stalk of the 50S ribosomal subunit. Interacts with L10 and the large rRNA to form the base of the stalk. L10 forms an elongated spine to which L12 dimers bind in a sequential fashion forming a multimeric L10(L12)X complex. One or more lysine residues are methylated.

Functionally, forms part of the ribosomal stalk which helps the ribosome interact with GTP-bound translation factors. This Pseudomonas savastanoi pv. phaseolicola (strain 1448A / Race 6) (Pseudomonas syringae pv. phaseolicola (strain 1448A / Race 6)) protein is Large ribosomal subunit protein uL11.